The following is a 421-amino-acid chain: Serine--tRNA ligase (421 aa).

L-serine is bound at residue 231–233; it reads TGE. Residue 262–264 participates in ATP binding; sequence RRE. An L-serine-binding site is contributed by Glu285. 349–352 contributes to the ATP binding site; the sequence is EVSS. L-serine is bound at residue Ser384.

It belongs to the class-II aminoacyl-tRNA synthetase family. Type-1 seryl-tRNA synthetase subfamily. In terms of assembly, homodimer. The tRNA molecule binds across the dimer.

The protein resides in the cytoplasm. It catalyses the reaction tRNA(Ser) + L-serine + ATP = L-seryl-tRNA(Ser) + AMP + diphosphate + H(+). The enzyme catalyses tRNA(Sec) + L-serine + ATP = L-seryl-tRNA(Sec) + AMP + diphosphate + H(+). Its pathway is aminoacyl-tRNA biosynthesis; selenocysteinyl-tRNA(Sec) biosynthesis; L-seryl-tRNA(Sec) from L-serine and tRNA(Sec): step 1/1. Functionally, catalyzes the attachment of serine to tRNA(Ser). Is also able to aminoacylate tRNA(Sec) with serine, to form the misacylated tRNA L-seryl-tRNA(Sec), which will be further converted into selenocysteinyl-tRNA(Sec). In Methylacidiphilum infernorum (isolate V4) (Methylokorus infernorum (strain V4)), this protein is Serine--tRNA ligase.